Here is a 179-residue protein sequence, read N- to C-terminus: Large ribosomal subunit protein bL9 (179 aa).

The protein belongs to the bacterial ribosomal protein bL9 family.

Binds to the 23S rRNA. The chain is Large ribosomal subunit protein bL9 from Bartonella bacilliformis (strain ATCC 35685 / KC583 / Herrer 020/F12,63).